Consider the following 104-residue polypeptide: L-rhamnose mutarotase (104 aa).

A substrate-binding site is contributed by Tyr18. Catalysis depends on His22, which acts as the Proton donor. Substrate contacts are provided by residues Tyr41 and Trp76 to Trp77.

The protein belongs to the rhamnose mutarotase family. Homodimer.

Its subcellular location is the cytoplasm. It catalyses the reaction alpha-L-rhamnose = beta-L-rhamnose. It participates in carbohydrate metabolism; L-rhamnose metabolism. In terms of biological role, involved in the anomeric conversion of L-rhamnose. This chain is L-rhamnose mutarotase, found in Shouchella clausii (strain KSM-K16) (Alkalihalobacillus clausii).